The following is a 769-amino-acid chain: MRCRSVALVWREWKWRGVGDKRQSRLIFLNLPSTLNPDTFRKTLLSPATLKSTTITDTKLVPKRRFAFVGYKDAEEAQKVKEWFDGTYAFGGGKVKVDFVKDEPLKTGDKLNRGEKSKEKRSKEGRDNVQEKQEPNKRLQEFMSVMKGVDPAMASPEASTSTAEGTKKEKSVKGKEKSEEPEEAEADDDDAAWLRRRQAALEGEPSTPQLSADEQLILSTSRLFVRNLAFITTSESLSSHFSTYGRIDECHLPVSQTTGEPLGTAFLQFHNAEDALAAYKALDKTIFQGRLLHVLPGRAKPGQEGAAAGSGVVDGKVLGKRDEGRGEVKSKVDAKRKQESAKGVNWASLYMNSDAVAASVADRMGISKSELLNADSGNSAVKLALAETTVIEETKKYFEEAGIVLESLQPRVPRSQTTILVKNIPYGTSIQSLTDLFAPHGKLTRVLLPPAGTLGVVEFENHMDAGRAFKALAYRRLGNAVLYLEKGPVGMFKSETAPGVGPISTEQKREEEAKALAEKVESLPEQPDPTDEAGSTLFLKGLNFTTTTPHLQTVLSHIPGFSFARVQMKPDPKRPGEKLSMGYGFVGFKTKEAATKALKALEGFEIDGKSLEVKFAQRGAEDDRETKKGGDAEGGKTKSTKVLVKNLPFEATKKDVRELFSAYGQLKSLRLPRKAVPTSTGAQSTRGFAFLEFTTHTEAARAMEALKHTHLLGRHLVLQWANEGEEVDIKGLREKVKGEVRGMEDGGDRKRRKLDFKGGKEDEMDGLEV.

An RRM 1 domain is found at 24 to 102; the sequence is SRLIFLNLPS…GKVKVDFVKD (79 aa). Disordered stretches follow at residues 105 to 139 and 151 to 191; these read LKTG…NKRL and PAMA…DDDA. The segment covering 165-178 has biased composition (basic and acidic residues); it reads GTKKEKSVKGKEKS. Residues 179 to 191 are compositionally biased toward acidic residues; sequence EEPEEAEADDDDA. 3 consecutive RRM domains span residues 221–299, 417–489, and 535–618; these read SRLF…PGRA, TTIL…KGPV, and STLF…FAQR. The interval 617-637 is disordered; that stretch reads QRGAEDDRETKKGGDAEGGKT. Residues 619–636 show a composition bias toward basic and acidic residues; it reads GAEDDRETKKGGDAEGGK. Residues 640–723 form the RRM 5 domain; sequence TKVLVKNLPF…RHLVLQWANE (84 aa). The disordered stretch occupies residues 740 to 769; that stretch reads VRGMEDGGDRKRRKLDFKGGKEDEMDGLEV.

It belongs to the RRM MRD1 family.

The protein localises to the nucleus. In terms of biological role, involved in pre-rRNA processing. The polypeptide is Multiple RNA-binding domain-containing protein 1 (MRD1) (Cryptococcus neoformans var. neoformans serotype D (strain B-3501A) (Filobasidiella neoformans)).